Consider the following 123-residue polypeptide: uncharacterized protein (123 aa).

The protein to M.tuberculosis Rv0477.

This is an uncharacterized protein from Mycobacterium leprae (strain TN).